The chain runs to 25 residues: Flagellar filament core protein flaB3 (25 aa).

The protein belongs to the bacterial flagellin family. The flagellum consists of an outer layer composed of two sheath proteins, flaA1 (44 kDa) and flaA2 (35 kDa) around a core that contains three proteins flaB1 (37 kDa), flaB2 (34 kDa) and flaB3 (32 kDa).

The protein resides in the periplasmic flagellum. It is found in the periplasm. In terms of biological role, component of the core of the flagella. The chain is Flagellar filament core protein flaB3 (flaB3) from Brachyspira hyodysenteriae (Treponema hyodysenteriae).